A 347-amino-acid polypeptide reads, in one-letter code: Quinolinate synthase (347 aa).

Residues H47 and S68 each contribute to the iminosuccinate site. Position 113 (C113) interacts with [4Fe-4S] cluster. Iminosuccinate-binding positions include 139-141 (YAN) and S156. [4Fe-4S] cluster is bound at residue C200. Iminosuccinate-binding positions include 226-228 (HPE) and T243. Residue C297 coordinates [4Fe-4S] cluster.

The protein belongs to the quinolinate synthase family. Type 1 subfamily. It depends on [4Fe-4S] cluster as a cofactor.

The protein resides in the cytoplasm. The catalysed reaction is iminosuccinate + dihydroxyacetone phosphate = quinolinate + phosphate + 2 H2O + H(+). Its pathway is cofactor biosynthesis; NAD(+) biosynthesis; quinolinate from iminoaspartate: step 1/1. Catalyzes the condensation of iminoaspartate with dihydroxyacetone phosphate to form quinolinate. The protein is Quinolinate synthase of Salmonella typhi.